A 254-amino-acid chain; its full sequence is Probable septum site-determining protein MinC (254 aa).

Belongs to the MinC family. As to quaternary structure, interacts with MinD and FtsZ.

Cell division inhibitor that blocks the formation of polar Z ring septums. Rapidly oscillates between the poles of the cell to destabilize FtsZ filaments that have formed before they mature into polar Z rings. Prevents FtsZ polymerization. The polypeptide is Probable septum site-determining protein MinC (Burkholderia ambifaria (strain ATCC BAA-244 / DSM 16087 / CCUG 44356 / LMG 19182 / AMMD) (Burkholderia cepacia (strain AMMD))).